Reading from the N-terminus, the 402-residue chain is Ferrochelatase, mitochondrial (402 aa).

The transit peptide at 1-33 directs the protein to the mitochondrion; sequence MAAAGRAARPLVAGGRQLRVPLRWRGQVAAAAP. Protoporphyrin IX is bound by residues Arg-94, Tyr-102, and Ser-109. Cys-175 is a binding site for [2Fe-2S] cluster. Residues His-209 and Asp-362 contribute to the active site. Residues Cys-382, Cys-385, and Cys-390 each contribute to the [2Fe-2S] cluster site.

The protein belongs to the ferrochelatase family. In terms of assembly, homodimer. Homotetramer. [2Fe-2S] cluster is required as a cofactor.

It is found in the mitochondrion inner membrane. It catalyses the reaction heme b + 2 H(+) = protoporphyrin IX + Fe(2+). The protein operates within porphyrin-containing compound metabolism; protoheme biosynthesis; protoheme from protoporphyrin-IX: step 1/1. Catalyzes the ferrous insertion into protoporphyrin IX. The chain is Ferrochelatase, mitochondrial from Gallus gallus (Chicken).